Consider the following 93-residue polypeptide: Alpha-defensin 6/12 (93 aa).

Positions 1–19 (MKTLILLSALVLLAFQVQA) are cleaved as a signal peptide. The propeptide occupies 20–60 (DPIQNTDEETKTEEQPGEEDQAVSVSFGDPEGTSLQEESLR). The segment at 23-54 (QNTDEETKTEEQPGEEDQAVSVSFGDPEGTSL) is disordered. Cystine bridges form between cysteine 64-cysteine 92, cysteine 66-cysteine 81, and cysteine 71-cysteine 91.

This sequence belongs to the alpha-defensin family. As to expression, paneth cells of the small bowel.

The protein resides in the secreted. Its function is as follows. Has broad-spectrum antimicrobial properties. Has antibacterial activity against the Gram-positive bacterium L.monocytogenes EGD and the Gram-negative bacteria E.coli ML-35p and avirulent S.typhimurium 7953, but not against the mouse-virulent S.typhimurium 14028S. Probably contributes to the antimicrobial barrier function of the small bowel mucosa. In Mus musculus (Mouse), this protein is Alpha-defensin 6/12 (Defa6).